The chain runs to 306 residues: tRNA-cytidine(32) 2-sulfurtransferase (306 aa).

Positions 44–49 match the PP-loop motif motif; that stretch reads SGGKDS. Cys119, Cys122, and Cys210 together coordinate [4Fe-4S] cluster.

This sequence belongs to the TtcA family. As to quaternary structure, homodimer. The cofactor is Mg(2+). [4Fe-4S] cluster is required as a cofactor.

Its subcellular location is the cytoplasm. It carries out the reaction cytidine(32) in tRNA + S-sulfanyl-L-cysteinyl-[cysteine desulfurase] + AH2 + ATP = 2-thiocytidine(32) in tRNA + L-cysteinyl-[cysteine desulfurase] + A + AMP + diphosphate + H(+). It functions in the pathway tRNA modification. In terms of biological role, catalyzes the ATP-dependent 2-thiolation of cytidine in position 32 of tRNA, to form 2-thiocytidine (s(2)C32). The sulfur atoms are provided by the cysteine/cysteine desulfurase (IscS) system. This is tRNA-cytidine(32) 2-sulfurtransferase from Photorhabdus laumondii subsp. laumondii (strain DSM 15139 / CIP 105565 / TT01) (Photorhabdus luminescens subsp. laumondii).